We begin with the raw amino-acid sequence, 176 residues long: Ribosome rescue factor SmrB (176 aa).

In terms of domain architecture, Smr spans 98 to 173 (LDLHGLNQYQ…NDAAIMVIIE (76 aa)).

Belongs to the SmrB family. In terms of assembly, associates with collided ribosomes, but not with correctly translating polysomes.

Acts as a ribosome collision sensor. Detects stalled/collided disomes (pairs of ribosomes where the leading ribosome is stalled and a second ribosome has collided with it) and endonucleolytically cleaves mRNA at the 5' boundary of the stalled ribosome. Stalled/collided disomes form a new interface (primarily via the 30S subunits) that binds SmrB. Cleaved mRNA becomes available for tmRNA ligation, leading to ribosomal subunit dissociation and rescue of stalled ribosomes. The polypeptide is Ribosome rescue factor SmrB (Buchnera aphidicola subsp. Schizaphis graminum (strain Sg)).